The primary structure comprises 397 residues: MGFLKVLATSLATLAVVDAGTLLTASNTDAVIPSSYIVVMNDDVSTAEFSTHREWATNVHARLSRRKNGETGPGKHFEINGLKGYTASFDENTAKDIANDPAVKYIEPDMIVNATANVVQSNVPSWGLARISSKRTGTTSYTYDSTAGEGVVFYGVDTGIDISHSDFGGRAKWGTNVVDNDNTDGNGHGTHTASTAAGSKYGVAKKATLVAVKVLGADGSGTNSGVISGMDWAVKDAKSRGANGKYVMNTSLGGEFSKAVNDAAANVVKSGIFLSVAAGNEAENASNSSPASAAEACTIAASTSTDGSASFTNFGSVVDLYAPGQSITAAYPGGGSKTLSGTSMAAPHVAGVAAYLMALEGVSAGNACARIVQLATSSISRAPSGTTSKLLYNGINV.

A signal peptide spans 1-19 (MGFLKVLATSLATLAVVDA). A propeptide spans 20–115 (GTLLTASNTD…IEPDMIVNAT (96 aa)) (removed in mature form). The Inhibitor I9 domain occupies 35–113 (SYIVVMNDDV…KYIEPDMIVN (79 aa)). Asn113 carries an N-linked (GlcNAc...) asparagine glycan. The Peptidase S8 domain occupies 125–397 (SWGLARISSK…SKLLYNGINV (273 aa)). Catalysis depends on charge relay system residues Asp157 and His188. Residues Asn249 and Asn284 are each glycosylated (N-linked (GlcNAc...) asparagine). Residue Ser343 is the Charge relay system of the active site.

It belongs to the peptidase S8 family.

The protein resides in the secreted. Serine protease. The polypeptide is Subtilisin-like serine protease Pen ch 13.0101 (Penicillium rubens).